We begin with the raw amino-acid sequence, 466 residues long: 23S rRNA (uracil(1939)-C(5))-methyltransferase RlmD (466 aa).

The TRAM domain occupies 1–54 (MVDVLNIESLDLEARGIAHRDGKVLFVEGALPGERVTVQTVRRKPSYEIAKVEE). 4 residues coordinate [4Fe-4S] cluster: cysteine 67, cysteine 73, cysteine 76, and cysteine 155. The S-adenosyl-L-methionine site is built by glutamine 264, phenylalanine 293, asparagine 298, glutamate 314, asparagine 342, and aspartate 363. Cysteine 393 (nucleophile) is an active-site residue.

The protein belongs to the class I-like SAM-binding methyltransferase superfamily. RNA M5U methyltransferase family. RlmD subfamily.

It carries out the reaction uridine(1939) in 23S rRNA + S-adenosyl-L-methionine = 5-methyluridine(1939) in 23S rRNA + S-adenosyl-L-homocysteine + H(+). Functionally, catalyzes the formation of 5-methyl-uridine at position 1939 (m5U1939) in 23S rRNA. The polypeptide is 23S rRNA (uracil(1939)-C(5))-methyltransferase RlmD (Bordetella bronchiseptica (strain ATCC BAA-588 / NCTC 13252 / RB50) (Alcaligenes bronchisepticus)).